Here is a 212-residue protein sequence, read N- to C-terminus: Peptide methionine sulfoxide reductase MsrA (212 aa).

Cys-51 is a catalytic residue.

Belongs to the MsrA Met sulfoxide reductase family.

It carries out the reaction L-methionyl-[protein] + [thioredoxin]-disulfide + H2O = L-methionyl-(S)-S-oxide-[protein] + [thioredoxin]-dithiol. It catalyses the reaction [thioredoxin]-disulfide + L-methionine + H2O = L-methionine (S)-S-oxide + [thioredoxin]-dithiol. Functionally, has an important function as a repair enzyme for proteins that have been inactivated by oxidation. Catalyzes the reversible oxidation-reduction of methionine sulfoxide in proteins to methionine. This is Peptide methionine sulfoxide reductase MsrA from Vibrio parahaemolyticus serotype O3:K6 (strain RIMD 2210633).